Consider the following 1108-residue polypeptide: Lon protease homolog, mitochondrial (1108 aa).

The N-terminal 62 residues, 1–62 (MLRGQSLPWR…RAFSTSSIRR (62 aa)), are a transit peptide targeting the mitochondrion. 2 disordered regions span residues 24–192 (PLLP…QKPS) and 299–318 (LPPG…PEKK). The span at 36–53 (RSNLSISRLSRSPSLSPR) shows a compositional bias: low complexity. Composition is skewed to basic and acidic residues over residues 78–103 (EQKD…DSTG) and 119–146 (KVAG…KSDP). The span at 161–171 (SDTKSSASNGG) shows a compositional bias: polar residues. Composition is skewed to basic and acidic residues over residues 174–188 (DGGR…DRAL) and 309–318 (NTEDKAPEKK). The region spanning 200-452 (VMAIPIAKRP…KALVVLKKEL (253 aa)) is the Lon N-terminal domain. 605 to 612 (GPPGVGKT) is an ATP binding site. Residues 821–855 (DKALTDEGKAAQEESKKETEEGDPKDPPADPEKST) are compositionally biased toward basic and acidic residues. Residues 821–862 (DKALTDEGKAAQEESKKETEEGDPKDPPADPEKSTTETPRLA) are disordered. The Lon proteolytic domain maps to 895–1081 (TFPPGVTMGL…SEVFNILFAE (187 aa)). Active-site residues include Ser-987 and Lys-1030.

Belongs to the peptidase S16 family. As to quaternary structure, homohexamer or homoheptamer. Organized in a ring with a central cavity.

Its subcellular location is the mitochondrion matrix. It carries out the reaction Hydrolysis of proteins in presence of ATP.. ATP-dependent serine protease that mediates the selective degradation of misfolded, unassembled or oxidatively damaged polypeptides as well as certain short-lived regulatory proteins in the mitochondrial matrix. May also have a chaperone function in the assembly of inner membrane protein complexes. Participates in the regulation of mitochondrial gene expression and in the maintenance of the integrity of the mitochondrial genome. Binds to mitochondrial DNA in a site-specific manner. This is Lon protease homolog, mitochondrial (pim1) from Aspergillus fumigatus (strain ATCC MYA-4609 / CBS 101355 / FGSC A1100 / Af293) (Neosartorya fumigata).